An 82-amino-acid polypeptide reads, in one-letter code: Sec-independent protein translocase protein TatA (82 aa).

A helical membrane pass occupies residues 1 to 21; sequence MGIFDWKHWIVILIVVVLVFG. The disordered stretch occupies residues 43-82; the sequence is VNTEEDDKKEQPAAQPAQPLNQPHTIDAQAQKVEEPARKD.

Belongs to the TatA/E family. The Tat system comprises two distinct complexes: a TatABC complex, containing multiple copies of TatA, TatB and TatC subunits, and a separate TatA complex, containing only TatA subunits. Substrates initially bind to the TatABC complex, which probably triggers association of the separate TatA complex to form the active translocon.

Its subcellular location is the cell inner membrane. Functionally, part of the twin-arginine translocation (Tat) system that transports large folded proteins containing a characteristic twin-arginine motif in their signal peptide across membranes. TatA could form the protein-conducting channel of the Tat system. The chain is Sec-independent protein translocase protein TatA from Pseudomonas paraeruginosa (strain DSM 24068 / PA7) (Pseudomonas aeruginosa (strain PA7)).